Reading from the N-terminus, the 358-residue chain is DNA ligase C (358 aa).

The active-site N6-AMP-lysine intermediate is lysine 29.

This sequence belongs to the ATP-dependent DNA ligase family. A divalent metal cation serves as cofactor.

It carries out the reaction ATP + (deoxyribonucleotide)n-3'-hydroxyl + 5'-phospho-(deoxyribonucleotide)m = (deoxyribonucleotide)n+m + AMP + diphosphate.. Functionally, DNA ligase that seals nicks in double-stranded DNA during DNA replication, DNA recombination and DNA repair. This Mycobacterium tuberculosis (strain ATCC 25618 / H37Rv) protein is DNA ligase C (ligC).